A 359-amino-acid chain; its full sequence is DNA polymerase IV (359 aa).

The 182-residue stretch at 4–185 (IIHIDMDCYF…LPLSKIPGVG (182 aa)) folds into the UmuC domain. Asp8 and Asp103 together coordinate Mg(2+). Glu104 is an active-site residue.

Belongs to the DNA polymerase type-Y family. In terms of assembly, monomer. Mg(2+) serves as cofactor.

Its subcellular location is the cytoplasm. It catalyses the reaction DNA(n) + a 2'-deoxyribonucleoside 5'-triphosphate = DNA(n+1) + diphosphate. In terms of biological role, poorly processive, error-prone DNA polymerase involved in untargeted mutagenesis. Copies undamaged DNA at stalled replication forks, which arise in vivo from mismatched or misaligned primer ends. These misaligned primers can be extended by PolIV. Exhibits no 3'-5' exonuclease (proofreading) activity. May be involved in translesional synthesis, in conjunction with the beta clamp from PolIII. The sequence is that of DNA polymerase IV from Shewanella frigidimarina (strain NCIMB 400).